A 156-amino-acid polypeptide reads, in one-letter code: ATP synthase subunit b (156 aa).

A helical transmembrane segment spans residues 7–29 (LLGQAISFALFVWFCMKYVWPPL).

Belongs to the ATPase B chain family. In terms of assembly, F-type ATPases have 2 components, F(1) - the catalytic core - and F(0) - the membrane proton channel. F(1) has five subunits: alpha(3), beta(3), gamma(1), delta(1), epsilon(1). F(0) has three main subunits: a(1), b(2) and c(10-14). The alpha and beta chains form an alternating ring which encloses part of the gamma chain. F(1) is attached to F(0) by a central stalk formed by the gamma and epsilon chains, while a peripheral stalk is formed by the delta and b chains.

The protein resides in the cell inner membrane. In terms of biological role, f(1)F(0) ATP synthase produces ATP from ADP in the presence of a proton or sodium gradient. F-type ATPases consist of two structural domains, F(1) containing the extramembraneous catalytic core and F(0) containing the membrane proton channel, linked together by a central stalk and a peripheral stalk. During catalysis, ATP synthesis in the catalytic domain of F(1) is coupled via a rotary mechanism of the central stalk subunits to proton translocation. Component of the F(0) channel, it forms part of the peripheral stalk, linking F(1) to F(0). The polypeptide is ATP synthase subunit b (Vibrio parahaemolyticus serotype O3:K6 (strain RIMD 2210633)).